Consider the following 185-residue polypeptide: NEDD8-conjugating enzyme UBE2F (185 aa).

Met1 carries the N-acetylmethionine modification. A UBC core domain is found at 32–185 (VRDKLLVKEV…VDEYIKRYAR (154 aa)). Cys116 acts as the Glycyl thioester intermediate in catalysis.

It belongs to the ubiquitin-conjugating enzyme family. UBE2F subfamily. In terms of assembly, interacts with UBA3 and RBX2. Interacts (N-terminally acetylated form) with (via DCUN1 domain) DCUN1D1, DCUN1D2, DCUN1D3, DCUN1D4 and DCUN1D5. In terms of processing, the acetylation of Met-1 increases affinity for DCUN1D3 by about 2 orders of magnitude and is crucial for NEDD8 transfer to cullins.

It catalyses the reaction [E1 NEDD8-activating enzyme]-S-[NEDD8 protein]-yl-L-cysteine + [E2 NEDD8-conjugating enzyme]-L-cysteine = [E1 NEDD8-activating enzyme]-L-cysteine + [E2 NEDD8-conjugating enzyme]-S-[NEDD8-protein]-yl-L-cysteine.. Its pathway is protein modification; protein neddylation. Its function is as follows. Accepts the ubiquitin-like protein NEDD8 from the UBA3-NAE1 E1 complex and catalyzes its covalent attachment to other proteins. Together with the E3 ubiquitin ligase RNF7/RBX2, specifically neddylates cullin-5 (CUL5). Does not neddylate CUL1, CUL2, CUL3, CUL4A or CUL4B. Mediates neddylation of the CUL9-RBX1 complex. This chain is NEDD8-conjugating enzyme UBE2F (Ube2f), found in Rattus norvegicus (Rat).